Consider the following 420-residue polypeptide: Zinc finger and BTB domain-containing protein 42 (420 aa).

Residues 24–92 (CDCTVLVGDA…MYEGRLDLHS (69 aa)) form the BTB domain. Disordered regions lie at residues 174–204 (PPSWQVSEESSGALDLSLKPGPRPEQAHPPC) and 216–248 (QGAQPLVKAEQDSFSEQDSSSPQSADRSPPPVC). Residues 227-241 (DSFSEQDSSSPQSAD) show a composition bias toward low complexity. 4 C2H2-type zinc fingers span residues 292 to 314 (CICPLCCKLFPSTHALQPHLSAH), 332 to 354 (PTCPLCSKTFSCTYTLKRHERTH), 360 to 382 (YTCVQCGKSFQYSHNLSRHAVVH), and 388 to 411 (HACRWCERRFTQSGDLYRHVRKFH).

Belongs to the krueppel C2H2-type zinc-finger protein family. ZBTB18 subfamily.

Its subcellular location is the cytoplasm. The protein resides in the nucleus. It localises to the nucleoplasm. Its function is as follows. Transcriptional repressor. Specifically binds DNA and probably acts by recruiting chromatin remodeling multiprotein complexes. The sequence is that of Zinc finger and BTB domain-containing protein 42 (Zbtb42) from Rattus norvegicus (Rat).